Reading from the N-terminus, the 181-residue chain is uncharacterized protein (181 aa).

The next 2 membrane-spanning stretches (helical) occupy residues 24-46 and 55-77; these read IAAV…LLNV and GIVA…YILL.

It localises to the cell membrane. This is an uncharacterized protein from Archaeoglobus fulgidus (strain ATCC 49558 / DSM 4304 / JCM 9628 / NBRC 100126 / VC-16).